The primary structure comprises 287 residues: MEMO1 family protein MJ0403 (287 aa).

Belongs to the MEMO1 family.

In Methanocaldococcus jannaschii (strain ATCC 43067 / DSM 2661 / JAL-1 / JCM 10045 / NBRC 100440) (Methanococcus jannaschii), this protein is MEMO1 family protein MJ0403.